The following is a 76-amino-acid chain: uncharacterized protein (76 aa).

Transmembrane regions (helical) follow at residues 2–22, 28–48, and 56–76; these read LKVA…YSLF, LLIV…VEAI, and EYLL…KFII.

It is found in the cell membrane. This is an uncharacterized protein from Bacillus subtilis (strain 168).